Reading from the N-terminus, the 98-residue chain is VQ motif-containing protein 1 (98 aa).

Residues 27–36 (FKTIVQELTG) carry the VQ motif.

As to quaternary structure, interacts with WRKY33.

Its subcellular location is the nucleus. Its function is as follows. May modulate WRKY transcription factor activities. The protein is VQ motif-containing protein 1 of Arabidopsis thaliana (Mouse-ear cress).